A 391-amino-acid chain; its full sequence is 3-ketoacyl-CoA thiolase (391 aa).

Catalysis depends on C95, which acts as the Acyl-thioester intermediate. Active-site proton acceptor residues include H347 and C377.

It belongs to the thiolase-like superfamily. Thiolase family. In terms of assembly, heterotetramer of two alpha chains (FadB) and two beta chains (FadA).

Its subcellular location is the cytoplasm. It catalyses the reaction an acyl-CoA + acetyl-CoA = a 3-oxoacyl-CoA + CoA. The protein operates within lipid metabolism; fatty acid beta-oxidation. Functionally, catalyzes the final step of fatty acid oxidation in which acetyl-CoA is released and the CoA ester of a fatty acid two carbons shorter is formed. This chain is 3-ketoacyl-CoA thiolase, found in Pseudomonas savastanoi pv. phaseolicola (strain 1448A / Race 6) (Pseudomonas syringae pv. phaseolicola (strain 1448A / Race 6)).